A 141-amino-acid polypeptide reads, in one-letter code: Nucleoside triphosphatase NudI (141 aa).

The 141-residue stretch at 1-141 (MRQRTIVCPL…RVTLSQKGLL (141 aa)) folds into the Nudix hydrolase domain. The short motif at 38–59 (GGVEPVERIEEALRREIREELG) is the Nudix box element.

The protein belongs to the Nudix hydrolase family. NudI subfamily. As to quaternary structure, monomer. Mg(2+) serves as cofactor.

It carries out the reaction a ribonucleoside 5'-triphosphate + H2O = a ribonucleoside 5'-phosphate + diphosphate + H(+). The catalysed reaction is a 2'-deoxyribonucleoside 5'-triphosphate + H2O = a 2'-deoxyribonucleoside 5'-phosphate + diphosphate + H(+). The enzyme catalyses dUTP + H2O = dUMP + diphosphate + H(+). It catalyses the reaction dTTP + H2O = dTMP + diphosphate + H(+). It carries out the reaction dCTP + H2O = dCMP + diphosphate + H(+). In terms of biological role, catalyzes the hydrolysis of nucleoside triphosphates, with a preference for pyrimidine deoxynucleoside triphosphates (dUTP, dTTP and dCTP). This is Nucleoside triphosphatase NudI from Klebsiella pneumoniae (strain 342).